The chain runs to 263 residues: Acetylglutamate kinase (263 aa).

Substrate is bound by residues 48–49 (GG), Arg-70, and Asn-162.

This sequence belongs to the acetylglutamate kinase family. ArgB subfamily.

The protein resides in the cytoplasm. The catalysed reaction is N-acetyl-L-glutamate + ATP = N-acetyl-L-glutamyl 5-phosphate + ADP. It participates in amino-acid biosynthesis; L-arginine biosynthesis; N(2)-acetyl-L-ornithine from L-glutamate: step 2/4. In terms of biological role, catalyzes the ATP-dependent phosphorylation of N-acetyl-L-glutamate. The sequence is that of Acetylglutamate kinase from Vibrio vulnificus (strain CMCP6).